A 581-amino-acid chain; its full sequence is Protein alan shepard (581 aa).

Pro residues predominate over residues 1-10 (MHPRYSPAPP). The disordered stretch occupies residues 1-73 (MHPRYSPAPP…AVTAAPPTPR (73 aa)). At Tyr5 the chain carries Phosphotyrosine. The segment covering 35 to 54 (ANNSQQLPPQMPRSQNYANG) has biased composition (polar residues). Residues 55–68 (SSSSAAAASAVTAA) are compositionally biased toward low complexity. Phosphotyrosine is present on residues Tyr128 and Tyr146. Positions 168 to 226 (PATTTYGQRVPTAASPSNTNSSSSSNTGSQSGTLSTSLSHTTNTNTNMGPNGTAQNQNQ) are enriched in low complexity. The segment at 168–234 (PATTTYGQRV…NQQGGGGEQL (67 aa)) is disordered. 2 consecutive RRM domains span residues 237-310 (TNLY…MAKQ) and 316-395 (TNLY…FADG). A disordered region spans residues 555–581 (MTDSEQASTAASPDEAYTQYPHQAAPK).

Has a role in the perception of gravity. The protein is Protein alan shepard of Drosophila willistoni (Fruit fly).